Reading from the N-terminus, the 749-residue chain is Probable serine/threonine-protein kinase fhkD (749 aa).

In terms of domain architecture, FHA spans 47-150; the sequence is IFFGRNPKRC…NGTFVKGCIL (104 aa). Over residues 84 to 126 the composition is skewed to low complexity; sequence NNNNNDGDNNNNNNNNNNNNNNNNNNNNNNNNNNNNNNNNNNN. A disordered region spans residues 84–130; the sequence is NNNNNDGDNNNNNNNNNNNNNNNNNNNNNNNNNNNNNNNNNNNTTKN. The Protein kinase domain occupies 199-472; that stretch reads YSIQGILGTG…TKGALSHDWF (274 aa). ATP-binding positions include 205–213 and K228; that span reads LGTGNFSVV. The Proton acceptor role is filled by D323. Disordered regions lie at residues 512-620 and 640-749; these read NIPM…PAII and CTPT…LKGS. A compositionally biased stretch (low complexity) spans 516 to 561; that stretch reads TLNSTTTNTTSPNNNNNNNNNNNNKNNNKNIIKSLNSNSNNYNNNS. The span at 562–572 shows a compositional bias: polar residues; the sequence is VLKKTSQSPKT. 2 stretches are compositionally biased toward low complexity: residues 590–611 and 651–667; these read NNNNNNNNNNNNNNNNNNNNNN and TNSTTTSTATSMPTSNS. A compositionally biased stretch (polar residues) spans 668–687; sequence VTMGTSSTSIPVSNSITMKS. Residues 696–707 are compositionally biased toward basic and acidic residues; that stretch reads DGDKKRKEKESS. Low complexity predominate over residues 708–739; it reads SSENVNDVIVINSNNHNNNNNNNHNINNGISS.

It belongs to the protein kinase superfamily. CAMK Ser/Thr protein kinase family. CHK2 subfamily.

It catalyses the reaction L-seryl-[protein] + ATP = O-phospho-L-seryl-[protein] + ADP + H(+). The enzyme catalyses L-threonyl-[protein] + ATP = O-phospho-L-threonyl-[protein] + ADP + H(+). The polypeptide is Probable serine/threonine-protein kinase fhkD (fhkD) (Dictyostelium discoideum (Social amoeba)).